A 686-amino-acid polypeptide reads, in one-letter code: MSKIRVHEYAKKHNISSKDLMTKLKEMNIEVSNHMTMLDDEVVNKLDNEYQAEKPSVADEFEVEEKVVRSKKNSNKKKKKGKGNEDKRQENFAGRQQTQTVETPDKITFSGSLTVGDLAKKLSKEPSEIIKKLFMLGIMATINQDLDKDTIELIANDYGIEVEEEVIVSETEFETFIDEQDDEENLKERPAVVTIMGHVDHGKTTLLDSIRNSKVTAGEAGGITQHIGAYQVELNDKKITFLDTPGHAAFTTMRARGAQVTDITIIVVAADDGVMPQTVEAINHAKAAGVPIIVAVNKMDKPAANPDRVMQELTEYELVPEAWGGDTIFVPISAIQGEGIDNLLEMILLISEVEEYKANPNRYATGTVIEAQLDKGKGTIATLLVQNGTLRVGDPIVVGTSFGRVRAMVSDIGRRVKVAGPSTPVEITGLNEVPQAGDRFMAFADEKKARQIGESRAQEALLAQRGEKSKLSLEDLFQQIQEGDVKEINLIVKADVQGSVEAMAASLRKIDVEGVKVKIIHTGVGAITESDIILASASNAIVIGFNVRPDVNAKRTAELENVDIRLHRIIYKVIEEIEAAMQGMLDPEFEEKVIGQAEVRQTFKVTKVGTIAGCYVTDGKITRDSGVRIIRDGVVIFEGQLDTLKRFKDDVKEVAQNYECGITIERYNDLKEGDIIEAYIMEEVKR.

Residues 54 to 105 form a disordered region; sequence KPSVADEFEVEEKVVRSKKNSNKKKKKGKGNEDKRQENFAGRQQTQTVETPD. Residues 69–81 are compositionally biased toward basic residues; the sequence is RSKKNSNKKKKKG. One can recognise a tr-type G domain in the interval 188-357; that stretch reads ERPAVVTIMG…LLISEVEEYK (170 aa). The segment at 197-204 is G1; the sequence is GHVDHGKT. 197–204 is a GTP binding site; it reads GHVDHGKT. A G2 region spans residues 222 to 226; the sequence is GITQH. Residues 243-246 form a G3 region; that stretch reads DTPG. GTP contacts are provided by residues 243–247 and 297–300; these read DTPGH and NKMD. The segment at 297–300 is G4; that stretch reads NKMD. The G5 stretch occupies residues 333 to 335; the sequence is SAI.

It belongs to the TRAFAC class translation factor GTPase superfamily. Classic translation factor GTPase family. IF-2 subfamily.

It is found in the cytoplasm. Its function is as follows. One of the essential components for the initiation of protein synthesis. Protects formylmethionyl-tRNA from spontaneous hydrolysis and promotes its binding to the 30S ribosomal subunits. Also involved in the hydrolysis of GTP during the formation of the 70S ribosomal complex. This Bacillus anthracis (strain A0248) protein is Translation initiation factor IF-2.